Reading from the N-terminus, the 373-residue chain is 4-hydroxy-3-methylbut-2-en-1-yl diphosphate synthase (flavodoxin) (373 aa).

[4Fe-4S] cluster-binding residues include Cys-270, Cys-273, Cys-305, and Glu-312.

It belongs to the IspG family. Requires [4Fe-4S] cluster as cofactor.

It carries out the reaction (2E)-4-hydroxy-3-methylbut-2-enyl diphosphate + oxidized [flavodoxin] + H2O + 2 H(+) = 2-C-methyl-D-erythritol 2,4-cyclic diphosphate + reduced [flavodoxin]. It functions in the pathway isoprenoid biosynthesis; isopentenyl diphosphate biosynthesis via DXP pathway; isopentenyl diphosphate from 1-deoxy-D-xylulose 5-phosphate: step 5/6. Functionally, converts 2C-methyl-D-erythritol 2,4-cyclodiphosphate (ME-2,4cPP) into 1-hydroxy-2-methyl-2-(E)-butenyl 4-diphosphate. The polypeptide is 4-hydroxy-3-methylbut-2-en-1-yl diphosphate synthase (flavodoxin) (Erwinia tasmaniensis (strain DSM 17950 / CFBP 7177 / CIP 109463 / NCPPB 4357 / Et1/99)).